A 180-amino-acid chain; its full sequence is Large ribosomal subunit protein uL6c (180 aa).

This sequence belongs to the universal ribosomal protein uL6 family. In terms of assembly, part of the 50S ribosomal subunit.

It localises to the plastid. Its subcellular location is the chloroplast. Functionally, binds 23S rRNA. This chain is Large ribosomal subunit protein uL6c (rpl6), found in Porphyra purpurea (Red seaweed).